A 109-amino-acid chain; its full sequence is EPIDERMAL PATTERNING FACTOR-like protein 4 (109 aa).

A signal peptide spans 1–26 (MGTFRRRRRFLLAALVTFALLHLFSA). Cystine bridges form between cysteine 66–cysteine 100, cysteine 70–cysteine 76, and cysteine 73–cysteine 102.

Belongs to the plant cysteine rich small secretory peptide family. Epidermal patterning factor subfamily. In terms of assembly, interacts with ERECTA. Expressed at the base of the apical meristem at 3 days after germination. Not detected in the hypocotyl. Expressed in developing stems soon after bolting, in inflorescence stems and in young siliques.

The protein localises to the secreted. In terms of biological role, acts primarily as positive regulator of inflorescence growth. Endodermal expression is sufficient for proper inflorescence architecture. Redundantly involved with EPFL6 in procambial development regulation. Controls stomatal patterning. Mediates stomatal development inhibition. TMM (AC Q9SSD1) functions to dampen or block CLL2 signaling. Acts as a growth-regulatory ligand for ERECTA family receptors. This is EPIDERMAL PATTERNING FACTOR-like protein 4 from Arabidopsis thaliana (Mouse-ear cress).